The sequence spans 146 residues: Thyroid hormone-inducible hepatic protein (146 aa).

A disordered region spans residues K83 to S104. Residues E94–S104 show a composition bias toward acidic residues.

Belongs to the SPOT14 family. As to quaternary structure, homodimer. Heterodimer with MID1IP1. Interacts with THRB and PLAGL1. As to expression, mainly expressed in tissues that synthesize triglycerides.

It localises to the nucleus. It is found in the cytoplasm. Its function is as follows. Plays a role in the regulation of lipogenesis, especially in lactating mammary gland. Important for the biosynthesis of triglycerides with medium-length fatty acid chains. May modulate lipogenesis by interacting with MID1IP1 and preventing its interaction with ACACA. May function as transcriptional coactivator. May modulate the transcription factor activity of THRB. The protein is Thyroid hormone-inducible hepatic protein (THRSP) of Homo sapiens (Human).